Consider the following 208-residue polypeptide: High frequency lysogenization protein HflD homolog (208 aa).

It belongs to the HflD family.

The protein localises to the cytoplasm. Its subcellular location is the cell inner membrane. The sequence is that of High frequency lysogenization protein HflD homolog from Edwardsiella ictaluri (strain 93-146).